Consider the following 83-residue polypeptide: Cell division topological specificity factor (83 aa).

Belongs to the MinE family.

Prevents the cell division inhibition by proteins MinC and MinD at internal division sites while permitting inhibition at polar sites. This ensures cell division at the proper site by restricting the formation of a division septum at the midpoint of the long axis of the cell. This is Cell division topological specificity factor from Buchnera aphidicola subsp. Acyrthosiphon pisum (strain 5A).